Reading from the N-terminus, the 180-residue chain is Small ribosomal subunit protein uS5 (180 aa).

One can recognise an S5 DRBM domain in the interval 24–87; it reads MIEKLVAVNR…EQARKNLATV (64 aa).

This sequence belongs to the universal ribosomal protein uS5 family. In terms of assembly, part of the 30S ribosomal subunit. Contacts proteins S4 and S8.

In terms of biological role, with S4 and S12 plays an important role in translational accuracy. Functionally, located at the back of the 30S subunit body where it stabilizes the conformation of the head with respect to the body. The sequence is that of Small ribosomal subunit protein uS5 from Xanthomonas axonopodis pv. citri (strain 306).